The sequence spans 273 residues: Chaperone protein PsaB (273 aa).

An N-terminal signal peptide occupies residues 1–31; sequence MKNLFFSAYKKVFSYITSIVIFMVSLPYAYS. Cysteines 128 and 163 form a disulfide.

Belongs to the periplasmic pilus chaperone family.

It is found in the periplasm. Required for the biogenesis of the pH 6 antigen. This is Chaperone protein PsaB (psaB) from Yersinia pestis.